Reading from the N-terminus, the 395-residue chain is Zinc-regulated GTPase metalloprotein activator 1A (395 aa).

A disordered region spans residues 1-22; sequence MLPAVGSADEEEDPAEEDCPEL. Acidic residues predominate over residues 8 to 20; sequence ADEEEDPAEEDCP. Positions 17–24 match the psi-PxLVp motif motif; the sequence is EDCPELVP. A GTP-binding site is contributed by 49–56; it reads GYLGAGKT. Positions 107, 109, and 110 each coordinate Zn(2+). The CXCC motif signature appears at 107 to 110; it reads CLCC. Residues 110–114 and 203–206 contribute to the GTP site; these read CSVKD and NKTD. Residues 274-377 enclose the CobW C-terminal domain; the sequence is IVTITFEVPG…ILKQLFIATV (104 aa).

It belongs to the SIMIBI class G3E GTPase family. ZNG1 subfamily. In terms of tissue distribution, ubiquitously expressed. Up-regulated in cultured astrocytes treated with dopamine.

It localises to the nucleus. It carries out the reaction GTP + H2O = GDP + phosphate + H(+). In terms of biological role, zinc chaperone that directly transfers zinc cofactor to target metalloproteins, thereby activating them. Catalyzes zinc insertion into the active site of methionine aminopeptidase METAP1, which function to cleave the initiator methionine from polypeptides during or after protein translation. Mechanistically, the N-terminal psi-PxLVp motif binds to the C6H2-type zinc finger of inactive form of METAP1. After formation of the docked complex, zinc is transferred from the CXCC motif in the GTPase domain of ZNG1A to the zinc binding site in the peptidase domain of METAP1 in a process requiring GTP hydrolysis. GTP/GDP exchange is required for release of active METAP1. This Homo sapiens (Human) protein is Zinc-regulated GTPase metalloprotein activator 1A.